Consider the following 508-residue polypeptide: Maturase K (508 aa).

This sequence belongs to the intron maturase 2 family. MatK subfamily.

It localises to the plastid. It is found in the chloroplast. Functionally, usually encoded in the trnK tRNA gene intron. Probably assists in splicing its own and other chloroplast group II introns. The polypeptide is Maturase K (Amburana cearensis (Cerejeira)).